The primary structure comprises 266 residues: Small ribosomal subunit protein uS3 (266 aa).

One can recognise a KH type-2 domain in the interval 39 to 107; it reads VREYLKKKLK…PVHVNIEEIR (69 aa). Positions 218 to 266 are disordered; the sequence is EVAEDKRPRRNARPGDRRPRRDGEGGAPGARRGAPRRGAGKPEDGKTGE. 2 stretches are compositionally biased toward basic and acidic residues: residues 230 to 241 and 257 to 266; these read RPGDRRPRRDGE and GKPEDGKTGE.

This sequence belongs to the universal ribosomal protein uS3 family. As to quaternary structure, part of the 30S ribosomal subunit. Forms a tight complex with proteins S10 and S14.

Functionally, binds the lower part of the 30S subunit head. Binds mRNA in the 70S ribosome, positioning it for translation. The polypeptide is Small ribosomal subunit protein uS3 (Burkholderia ambifaria (strain MC40-6)).